The chain runs to 385 residues: Putative F-box protein At1g47765 (385 aa).

Positions 1–19 (MEQQKQKKRKVVSKSKRTQ) are enriched in basic residues. The segment at 1-24 (MEQQKQKKRKVVSKSKRTQSKSAS) is disordered. The 50-residue stretch at 20–69 (SKSASSLPLDLTSEILLRLPEKSIARFRCVSKLWLSITTDPYFINLFETR) folds into the F-box domain.

The sequence is that of Putative F-box protein At1g47765 from Arabidopsis thaliana (Mouse-ear cress).